Here is a 202-residue protein sequence, read N- to C-terminus: IMP cyclohydrolase (202 aa).

The protein belongs to the archaeal IMP cyclohydrolase family.

It catalyses the reaction IMP + H2O = 5-formamido-1-(5-phospho-D-ribosyl)imidazole-4-carboxamide. It functions in the pathway purine metabolism; IMP biosynthesis via de novo pathway; IMP from 5-formamido-1-(5-phospho-D-ribosyl)imidazole-4-carboxamide: step 1/1. In terms of biological role, catalyzes the cyclization of 5-formylamidoimidazole-4-carboxamide ribonucleotide to IMP. The polypeptide is IMP cyclohydrolase (purO) (Methanocaldococcus jannaschii (strain ATCC 43067 / DSM 2661 / JAL-1 / JCM 10045 / NBRC 100440) (Methanococcus jannaschii)).